The primary structure comprises 564 residues: 4-hydroxybutyrate--CoA ligase 1 (564 aa).

The helical transmembrane segment at 105–125 threads the bilayer; the sequence is VHPMHWAVFLAVIKGGFVMVP. ATP contacts are provided by residues 204–212, 343–348, D429, and R444; these read TSGTTGMPK and DFYGQT. Residue T348 participates in substrate binding. Residue 452 to 454 coordinates CoA; that stretch reads SDY. A substrate-binding site is contributed by R455. CoA-binding positions include R484, K513, and 521–523; that span reads VPR. K538 contacts ATP.

Belongs to the ATP-dependent AMP-binding enzyme family. It depends on Mg(2+) as a cofactor. The cofactor is Mn(2+).

The protein localises to the membrane. The enzyme catalyses 4-hydroxybutanoate + ATP + CoA = 4-hydroxybutanoyl-CoA + AMP + diphosphate. It carries out the reaction acetate + ATP + CoA = acetyl-CoA + AMP + diphosphate. It catalyses the reaction propanoate + ATP + CoA = propanoyl-CoA + AMP + diphosphate. The catalysed reaction is a medium-chain fatty acid + ATP + CoA = a medium-chain fatty acyl-CoA + AMP + diphosphate. Functionally, involved in the 3-hydroxypropionate/4-hydroxybutyrate cycle which incorporates carbon dioxide into cellular carbon. Catalyzes the ligation of coenzyme A (CoA) to 4-hydroxybutyrate (4HB). It can also use butyrate, valerate, propionate, acetate and 3-hydroxybutyrate (3HB) as substrates. The chain is 4-hydroxybutyrate--CoA ligase 1 from Metallosphaera sedula (strain ATCC 51363 / DSM 5348 / JCM 9185 / NBRC 15509 / TH2).